Consider the following 286-residue polypeptide: Formamidopyrimidine-DNA glycosylase (286 aa).

Proline 2 functions as the Schiff-base intermediate with DNA in the catalytic mechanism. The active-site Proton donor is the glutamate 3. The active-site Proton donor; for beta-elimination activity is the lysine 61. Residues histidine 103, arginine 122, and arginine 164 each coordinate DNA. The FPG-type zinc finger occupies 250–284; sequence NAYAQTGEPCGRCGTLIIRESFMNRGSHYCPNCQK. Arginine 274 functions as the Proton donor; for delta-elimination activity in the catalytic mechanism.

The protein belongs to the FPG family. Monomer. It depends on Zn(2+) as a cofactor.

It catalyses the reaction Hydrolysis of DNA containing ring-opened 7-methylguanine residues, releasing 2,6-diamino-4-hydroxy-5-(N-methyl)formamidopyrimidine.. It carries out the reaction 2'-deoxyribonucleotide-(2'-deoxyribose 5'-phosphate)-2'-deoxyribonucleotide-DNA = a 3'-end 2'-deoxyribonucleotide-(2,3-dehydro-2,3-deoxyribose 5'-phosphate)-DNA + a 5'-end 5'-phospho-2'-deoxyribonucleoside-DNA + H(+). Functionally, involved in base excision repair of DNA damaged by oxidation or by mutagenic agents. Acts as a DNA glycosylase that recognizes and removes damaged bases. Has a preference for oxidized purines, such as 7,8-dihydro-8-oxoguanine (8-oxoG). Has AP (apurinic/apyrimidinic) lyase activity and introduces nicks in the DNA strand. Cleaves the DNA backbone by beta-delta elimination to generate a single-strand break at the site of the removed base with both 3'- and 5'-phosphates. The polypeptide is Formamidopyrimidine-DNA glycosylase (Corynebacterium glutamicum (strain ATCC 13032 / DSM 20300 / JCM 1318 / BCRC 11384 / CCUG 27702 / LMG 3730 / NBRC 12168 / NCIMB 10025 / NRRL B-2784 / 534)).